The following is a 381-amino-acid chain: Dihydroorotate dehydrogenase (quinone) (381 aa).

FMN-binding positions include 77 to 81 and A101; that span reads AGCDK. A substrate-binding site is contributed by K81. 126–129 is a substrate binding site; sequence NRLG. The FMN site is built by N158 and N191. N191 contacts substrate. S194 (nucleophile) is an active-site residue. N196 lines the substrate pocket. K229 and T257 together coordinate FMN. Residue 258-259 participates in substrate binding; that stretch reads NT. Residues G287, G316, and 337–338 contribute to the FMN site; that span reads YT.

This sequence belongs to the dihydroorotate dehydrogenase family. Type 2 subfamily. As to quaternary structure, monomer. The cofactor is FMN.

Its subcellular location is the cell membrane. The enzyme catalyses (S)-dihydroorotate + a quinone = orotate + a quinol. Its pathway is pyrimidine metabolism; UMP biosynthesis via de novo pathway; orotate from (S)-dihydroorotate (quinone route): step 1/1. Its function is as follows. Catalyzes the conversion of dihydroorotate to orotate with quinone as electron acceptor. In Synechocystis sp. (strain ATCC 27184 / PCC 6803 / Kazusa), this protein is Dihydroorotate dehydrogenase (quinone) (pyrD).